The primary structure comprises 266 residues: Interleukin-1 beta (266 aa).

Residues 1-114 (MAAVPELTSE…KTDADNFMSD (114 aa)) constitute a propeptide that is removed on maturation.

Belongs to the IL-1 family. As to quaternary structure, monomer. In its precursor form, weakly interacts with full-length MEFV; the mature cytokine does not interact at all. Interacts with integrins ITGAV:ITGBV and ITGA5:ITGB1; integrin-binding is required for IL1B signaling. Interacts with cargo receptor TMED10; the interaction is direct and is required for the secretion of IL1B mature form. Interacts with HSP90AB1; the interaction facilitates cargo translocation into the ERGIC. Interacts with HSP90B1; the interaction facilitates cargo translocation into the ERGIC.

It localises to the cytoplasm. The protein localises to the cytosol. It is found in the secreted. Its subcellular location is the lysosome. The protein resides in the extracellular exosome. Functionally, potent pro-inflammatory cytokine. Initially discovered as the major endogenous pyrogen, induces prostaglandin synthesis, neutrophil influx and activation, T-cell activation and cytokine production, B-cell activation and antibody production, and fibroblast proliferation and collagen production. Promotes Th17 differentiation of T-cells. Synergizes with IL12/interleukin-12 to induce IFNG synthesis from T-helper 1 (Th1) cells. Plays a role in angiogenesis by inducing VEGF production synergistically with TNF and IL6. Involved in transduction of inflammation downstream of pyroptosis: its mature form is specifically released in the extracellular milieu by passing through the gasdermin-D (GSDMD) pore. This is Interleukin-1 beta (IL1B) from Canis lupus familiaris (Dog).